The sequence spans 321 residues: Ras association domain-containing protein 4 (321 aa).

The disordered stretch occupies residues His-79–Ala-159. Polar residues predominate over residues Ser-98–Ser-110. At Ser-141 the chain carries Phosphoserine. In terms of domain architecture, Ras-associating spans Tyr-174–Leu-262. An SARAH domain is found at Val-270–Leu-317.

As to quaternary structure, interacts directly with activated KRAS in a GTP-dependent manner. Widely expressed. Frequently down-regulated in tumor cell lines.

Potential tumor suppressor. May act as a KRAS effector protein. May promote apoptosis and cell cycle arrest. In Homo sapiens (Human), this protein is Ras association domain-containing protein 4 (RASSF4).